The chain runs to 401 residues: Argininosuccinate synthase (401 aa).

8 to 16 (AYSGGLDTS) serves as a coordination point for ATP. Residue tyrosine 87 coordinates L-citrulline. Residue glycine 117 coordinates ATP. L-aspartate is bound by residues threonine 119, asparagine 123, and aspartate 124. Asparagine 123 provides a ligand contact to L-citrulline. Positions 127, 175, 259, and 271 each coordinate L-citrulline.

The protein belongs to the argininosuccinate synthase family. Type 1 subfamily. In terms of assembly, homotetramer.

The protein localises to the cytoplasm. It catalyses the reaction L-citrulline + L-aspartate + ATP = 2-(N(omega)-L-arginino)succinate + AMP + diphosphate + H(+). The protein operates within amino-acid biosynthesis; L-arginine biosynthesis; L-arginine from L-ornithine and carbamoyl phosphate: step 2/3. The protein is Argininosuccinate synthase of Pseudarthrobacter chlorophenolicus (strain ATCC 700700 / DSM 12829 / CIP 107037 / JCM 12360 / KCTC 9906 / NCIMB 13794 / A6) (Arthrobacter chlorophenolicus).